The chain runs to 414 residues: Serine hydroxymethyltransferase (414 aa).

Residues leucine 116 and 120–122 contribute to the (6S)-5,6,7,8-tetrahydrofolate site; that span reads GHL. Lysine 224 carries the N6-(pyridoxal phosphate)lysine modification. (6S)-5,6,7,8-tetrahydrofolate contacts are provided by residues glutamate 240 and 348 to 350; that span reads SPF.

Belongs to the SHMT family. In terms of assembly, homodimer. Requires pyridoxal 5'-phosphate as cofactor.

Its subcellular location is the cytoplasm. The enzyme catalyses (6R)-5,10-methylene-5,6,7,8-tetrahydrofolate + glycine + H2O = (6S)-5,6,7,8-tetrahydrofolate + L-serine. The protein operates within one-carbon metabolism; tetrahydrofolate interconversion. Its pathway is amino-acid biosynthesis; glycine biosynthesis; glycine from L-serine: step 1/1. Functionally, catalyzes the reversible interconversion of serine and glycine with tetrahydrofolate (THF) serving as the one-carbon carrier. This reaction serves as the major source of one-carbon groups required for the biosynthesis of purines, thymidylate, methionine, and other important biomolecules. Also exhibits THF-independent aldolase activity toward beta-hydroxyamino acids, producing glycine and aldehydes, via a retro-aldol mechanism. The protein is Serine hydroxymethyltransferase of Campylobacter jejuni subsp. jejuni serotype O:23/36 (strain 81-176).